The sequence spans 160 residues: Putative antiporter subunit mnhE2 (160 aa).

The next 3 helical transmembrane spans lie at 22 to 42 (HFKF…IYIL), 55 to 75 (IWVA…SSIS), and 100 to 120 (SDWA…STVI).

This sequence belongs to the CPA3 antiporters (TC 2.A.63) subunit E family. In terms of assembly, may form a heterooligomeric complex that consists of seven subunits: mnhA2, mnhB2, mnhC2, mnhD2, mnhE2, mnhF2 and mnhG2.

The protein localises to the cell membrane. The chain is Putative antiporter subunit mnhE2 (mnhE2) from Staphylococcus aureus (strain Mu3 / ATCC 700698).